The chain runs to 201 residues: Phosphoheptose isomerase (201 aa).

The 160-residue stretch at 36–195 (IAKSLNEGGK…EDILFEIPAA (160 aa)) folds into the SIS domain. A substrate-binding site is contributed by 51–53 (NGG). Positions 60 and 64 each coordinate Zn(2+). Substrate contacts are provided by residues Glu-64, 93–94 (ND), 119–121 (STS), Ser-124, and Gln-171. 2 residues coordinate Zn(2+): Gln-171 and His-179.

Belongs to the SIS family. GmhA subfamily. The cofactor is Zn(2+).

The protein resides in the cytoplasm. The enzyme catalyses 2 D-sedoheptulose 7-phosphate = D-glycero-alpha-D-manno-heptose 7-phosphate + D-glycero-beta-D-manno-heptose 7-phosphate. It participates in carbohydrate biosynthesis; D-glycero-D-manno-heptose 7-phosphate biosynthesis; D-glycero-alpha-D-manno-heptose 7-phosphate and D-glycero-beta-D-manno-heptose 7-phosphate from sedoheptulose 7-phosphate: step 1/1. Catalyzes the isomerization of sedoheptulose 7-phosphate in D-glycero-D-manno-heptose 7-phosphate. The protein is Phosphoheptose isomerase of Thermodesulfovibrio yellowstonii (strain ATCC 51303 / DSM 11347 / YP87).